The following is a 474-amino-acid chain: DNA-binding protein (474 aa).

Residues 1–34 form a disordered region; that stretch reads MAGRQREHPTVTPYLQETSPERPPPLPPKKKLRK. Residue tyrosine 142 is modified to Phosphotyrosine; by host. The Zn(2+) site is built by cysteine 231 and histidine 233. The segment at 244 to 278 is flexible loop; that stretch reads VEVDVGSENGQRALKEQPSKTKVVQNRWGRSVVQI. Zn(2+)-binding residues include cysteine 286, cysteine 302, cysteine 343, cysteine 345, cysteine 397, and cysteine 413. The C-terminal arm, DBP binding stretch occupies residues 460–474; it reads VALPTGHGDAEVEPF.

This sequence belongs to the adenoviridae E2A DNA-binding protein family. In terms of assembly, homomultimerizes on viral ssDNA bound to pTP. Forms a initiation complex with viral polymerase, pTP and hosts NFIA and POU2F1/OCT1. Interacts with host SRCAP.

Its subcellular location is the host nucleus. Functionally, plays a role in the elongation phase of viral strand displacement replication by unwinding the template in an ATP-independent fashion, employing its capacity to form multimers. Also enhances the rate of initiation. Released from template upon second strand synthesis. Assembles in complex with viral pTP, viral pol, host NFIA and host POU2F1/OCT1 on viral origin of replication. Covers the whole ssDNA genome during synthesis. The complementary strand synthesis induces its relese from DNA template. May inhibit cellular transcription mediated by the interaction between host SRCAP and CBP. This is DNA-binding protein from Homo sapiens (Human).